The sequence spans 221 residues: Ribose-5-phosphate isomerase A (221 aa).

Residues 26-29 (TGST), 81-84 (DGAD), and 94-97 (KGGG) each bind substrate. The Proton acceptor role is filled by Glu-103. Position 121 (Lys-121) interacts with substrate.

Belongs to the ribose 5-phosphate isomerase family. In terms of assembly, homodimer.

It catalyses the reaction aldehydo-D-ribose 5-phosphate = D-ribulose 5-phosphate. Its pathway is carbohydrate degradation; pentose phosphate pathway; D-ribose 5-phosphate from D-ribulose 5-phosphate (non-oxidative stage): step 1/1. Catalyzes the reversible conversion of ribose-5-phosphate to ribulose 5-phosphate. In Bacillus mycoides (strain KBAB4) (Bacillus weihenstephanensis), this protein is Ribose-5-phosphate isomerase A.